The sequence spans 397 residues: Phosphoglycerate kinase (397 aa).

Substrate contacts are provided by residues 21 to 23, arginine 37, 60 to 63, arginine 119, and arginine 152; these read DFN and HLGR. ATP is bound by residues lysine 203, glycine 294, glutamate 325, and 354–357; that span reads GGDS.

Belongs to the phosphoglycerate kinase family. Monomer.

The protein resides in the cytoplasm. It carries out the reaction (2R)-3-phosphoglycerate + ATP = (2R)-3-phospho-glyceroyl phosphate + ADP. It participates in carbohydrate degradation; glycolysis; pyruvate from D-glyceraldehyde 3-phosphate: step 2/5. This chain is Phosphoglycerate kinase, found in Chlorobium phaeovibrioides (strain DSM 265 / 1930) (Prosthecochloris vibrioformis (strain DSM 265)).